The primary structure comprises 185 residues: Elongation factor P (185 aa).

It belongs to the elongation factor P family.

The protein resides in the cytoplasm. It participates in protein biosynthesis; polypeptide chain elongation. Functionally, involved in peptide bond synthesis. Stimulates efficient translation and peptide-bond synthesis on native or reconstituted 70S ribosomes in vitro. Probably functions indirectly by altering the affinity of the ribosome for aminoacyl-tRNA, thus increasing their reactivity as acceptors for peptidyl transferase. This Geobacillus thermodenitrificans (strain NG80-2) protein is Elongation factor P.